A 328-amino-acid polypeptide reads, in one-letter code: Biotin synthase (328 aa).

The 230-residue stretch at 53–282 folds into the Radical SAM core domain; it reads FHGNRVDLCA…ATTIRYAGGR (230 aa). Residues Cys-71, Cys-75, and Cys-78 each coordinate [4Fe-4S] cluster. Positions 115, 147, 207, and 277 each coordinate [2Fe-2S] cluster.

Belongs to the radical SAM superfamily. Biotin synthase family. In terms of assembly, homodimer. Requires [4Fe-4S] cluster as cofactor. The cofactor is [2Fe-2S] cluster.

It catalyses the reaction (4R,5S)-dethiobiotin + (sulfur carrier)-SH + 2 reduced [2Fe-2S]-[ferredoxin] + 2 S-adenosyl-L-methionine = (sulfur carrier)-H + biotin + 2 5'-deoxyadenosine + 2 L-methionine + 2 oxidized [2Fe-2S]-[ferredoxin]. Its pathway is cofactor biosynthesis; biotin biosynthesis; biotin from 7,8-diaminononanoate: step 2/2. Its function is as follows. Catalyzes the conversion of dethiobiotin (DTB) to biotin by the insertion of a sulfur atom into dethiobiotin via a radical-based mechanism. This Desulforudis audaxviator (strain MP104C) protein is Biotin synthase.